We begin with the raw amino-acid sequence, 21 residues long: Japonicin-2 (21 aa).

Cys-14 and Cys-21 are disulfide-bonded.

In terms of tissue distribution, expressed by the skin glands.

It is found in the secreted. Antibacterial activity against the Gram-negative bacterium E.coli and the Gram-positive bacterium S.aureus. The polypeptide is Japonicin-2 (Rana japonica (Japanese reddish frog)).